Here is an 851-residue protein sequence, read N- to C-terminus: MAVAYPTDKHVVHEETGKGLEVYSIWTAISNGKMPSNKQLRGLGSSLTDGAKSVAKERQKKISDPARKFFSDFSKLIDNSFNVFAKKNEGDLLQNAIYELSQAEGSTNVNEVWNDITEDMQSQDFSTEDLKQLFLLIFNNGKLRTLLQNAIVLLGQQTTNVASKKLNEQDGKKSDNLRNGVNKVKQNMRNGASARDQAREQGSKAKDKIKNDPDAQKAKEETKQKLQDLYEEFKSVAVDLQGDPKYQHPVRSLLNLIDKFIDKLSEQSGNVTADTNEHYDRAMQYLKQLVENILNRSLDNLIDTLKQVQHDAENDEELKDWLESTRQFVRKVLLKKGYAKSDASDKEFNKLRDKGDELLNGRYKKRWQQLSSEVKKISDSASSDKDVKQLFSNYKNIYGDLIKREGGQISLKTSMCLEILRLGVPVILEKMQYFPIPRLEIEQPDFDVVLENLNLQTANVLPKLAEFRNNNFVRFSPYANITSFRENMINVHLSNIQCDLKDVNYYIKRKQGFPTFTDLGVVDLLIGKQGMVVNLTLSSFSNTMFENELPDSFFKVEDVKVDIHHIKLKIRKSRHRLLLAFLKPSLMTYVRSTVARSMELSIRHAFEQVDREWYEIHKEAKSEIEKDSSKPTEDQESKLKVYGRVAYSRISNLHKSSKEKGKDSQVRVALHKENTALNNIVLPSGNLQRSEEKRRAALSGSTWHSPAFNIFGVDDSEDSDSPWATDRGSRLYQRTKGSVKSRESRLKKEKHKNRPASKGTYTTYTSSEERQRSTEDPLSHDTLSRTILNDQIVKGNVTEIPLPPLAVNEKRASVAVSSIPSFGDDQHDIELLNSTDPRKNRILYNQPPAVA.

Composition is skewed to basic and acidic residues over residues 165 to 176, 196 to 223, and 767 to 781; these read KLNEQDGKKSDN, DQAREQGSKAKDKIKNDPDAQKAKEETK, and SEERQRSTEDPLSHD. Disordered regions lie at residues 165–223 and 714–781; these read KLNE…EETK and DDSE…LSHD.

Post-translationally, palmitoylated.

The polypeptide is Putative cell signaling protein (Schizosaccharomyces pombe (strain 972 / ATCC 24843) (Fission yeast)).